The primary structure comprises 681 residues: MFAVFWTNLRCLGYNTFTCGVETPTTWGKVGSLDASSSTFTTYRGYPLAMAISAGTPACDSPDDNIRRAINTLRADLSALLRGESVAYSAFLSACTKFDGFAQSCHGMLSDDTLDLLYSFSESLLALSENMALLETKKEAESNKFTAEVMAILSDKTSGLDLSDDKNEPTSPTPAYVEPCARWLKDNWYNPYPSGEVRTQIARQTRTSRKDIDAWFIDARRRIGWNEVRRKHFENKRVDIVRAASIFTGPQSIPAEVDALPDHIELEFAGILSRARSLYEEKFSPSKLAVKLDTAVKDMTPSLKEQLKNDEARRKREASTVGIINQRARHAYPTPERSPASAAELLASPPSFAIDSDKLPSVGRKRRRSLESDETVSSPLCKRPRSQSVFCELSPVKGLPSPSPSTQDELLETSAAPSPQPSLLPKLTPTDSARSTGKRKRRLSDGFQYPAAKRPEIRPQVVSDPFPATSSEHWEQWFREHVLSSPELTLTGDIPPAVTTDAPDSNTPLDIQLFNFPLIPDLPPSVPVVPAPTAELNIIEPLEVPAVTQVNVDPEATALDHTFSWMASDFPPPLQSTNTFPSSSPFSALDGMSLPFPDTRSSAFLPDPSLWSNISDPDLDFSTVFSQPSTNSAMTSSIQVPLQPTWLTSRSLSEQEREAKRKELEELEARAQAIRAEISAP.

The segment at residues 165-227 (DKNEPTSPTP…DARRRIGWNE (63 aa)) is a DNA-binding region (homeobox; TALE-type). Residues 307–318 (LKNDEARRKREA) show a composition bias toward basic and acidic residues. Disordered regions lie at residues 307-341 (LKND…SPAS), 353-381 (AIDS…SPLC), and 394-466 (SPVK…SDPF). The segment covering 413–430 (TSAAPSPQPSLLPKLTPT) has biased composition (low complexity).

It belongs to the TALE/M-ATYP homeobox family. In terms of assembly, may dimerize.

Its subcellular location is the nucleus. Functionally, has a major regulatory role in sexual and asexual development. It may bind DNA itself or it may have a role in preventing DNA-binding of another protein. This Coprinopsis cinerea (Inky cap fungus) protein is Mating-type protein beta1-1.